An 885-amino-acid chain; its full sequence is Exosome complex component 10 (885 aa).

A compositionally biased stretch (basic and acidic residues) spans 1–10 (MAPPSPREHQ). Disordered regions lie at residues 1–23 (MAPP…PDAE) and 210–232 (KPLP…EDLD). Lys-19 is covalently cross-linked (Glycyl lysine isopeptide (Lys-Gly) (interchain with G-Cter in SUMO2)). Basic and acidic residues predominate over residues 217–230 (SKERRERPQDRPED). One can recognise a 3'-5' exonuclease domain in the interval 289–455 (HVVSSLDELV…YIYDRMRLEL (167 aa)). Mg(2+) is bound by residues Asp-313, Glu-315, Asp-371, and Asp-440. Residues 503 to 583 (NSQQLTAFQL…QQAREMPLLK (81 aa)) enclose the HRDC domain. Lys-583 is covalently cross-linked (Glycyl lysine isopeptide (Lys-Gly) (interchain with G-Cter in SUMO1); alternate). A Glycyl lysine isopeptide (Lys-Gly) (interchain with G-Cter in SUMO2); alternate cross-link involves residue Lys-583. Lys-710 is covalently cross-linked (Glycyl lysine isopeptide (Lys-Gly) (interchain with G-Cter in SUMO2)). The segment at 730–885 (VQKEPKEAAK…RGFRHNWPKR (156 aa)) is disordered. Basic and acidic residues-rich tracts occupy residues 732 to 756 (KEPK…KEES) and 776 to 794 (ATKK…EQKQ). Ser-821 is subject to Phosphoserine. Residues Lys-833, Lys-859, and Lys-873 each participate in a glycyl lysine isopeptide (Lys-Gly) (interchain with G-Cter in SUMO2) cross-link.

The protein belongs to the exosome component 10/RRP6 family. Component of the RNA exosome complex. The catalytically inactive RNA exosome core complex (Exo-9) associates with the catalytic subunit EXOSC10/RRP6 (via its N-terminus). Exo-9 may associate with DIS3 to form the nucleolar exosome complex, or DIS3L to form the cytoplasmic exosome complex. The RNA exosome complex interacts with cofactors C1D/RRP47, MPHOSPH6/MPP6 and MTREX/MTR4. Interacts with MTREX; the interaction with MTREX mediates the association of MTREX with nuclear RNA exosomes. Part of the small subunit (SSU) processome, composed of more than 70 proteins and the RNA chaperone small nucleolar RNA (snoRNA) U3. Interacts with ALYREF/THOC4. Interacts with DHX36; this interaction occurs in a RNase-insensitive manner. Interacts with NRDE2. Interacts (via C-terminus) with USP36 (via C-terminus); the interaction is facilitated by the association with RNA and promotes sumoylation of EXOSC10. The cofactor is Mg(2+). In terms of processing, sumoylated by USP36; sumoylation does not significantly affect EXOSC10 nucleolar localization and association with core exosome and USP36, but regulates the nucleolar RNA exosome activity in rRNA processing by promoting binding of EXOSC10 to pre-rRNAs. Effects of sumoylation on EXOSC10 levels vary between different studies. Sumoylation of EXOSC10 is required for the modulation of EXOSC10 effects on cellular protein translation and cell proliferation. Sumoylation is promoted by mild hypothermia. In terms of tissue distribution, expressed in testis (at protein level).

The protein localises to the cytoplasm. Its subcellular location is the nucleus. It localises to the nucleolus. The protein resides in the nucleoplasm. Functionally, catalytic component of the RNA exosome complex which has 3'-&gt;5' exoribonuclease activity and participates in a multitude of cellular RNA processing and degradation events. In the nucleus, the RNA exosome complex is involved in proper maturation of stable RNA species such as rRNA, snRNA and snoRNA, in the elimination of RNA processing by-products and non-coding 'pervasive' transcripts, such as antisense RNA species and promoter-upstream transcripts (PROMPTs), and of mRNAs with processing defects, thereby limiting or excluding their export to the cytoplasm. Part of the small subunit (SSU) processome, first precursor of the small eukaryotic ribosomal subunit. During the assembly of the SSU processome in the nucleolus, many ribosome biogenesis factors, an RNA chaperone and ribosomal proteins associate with the nascent pre-rRNA and work in concert to generate RNA folding, modifications, rearrangements and cleavage as well as targeted degradation of pre-ribosomal RNA by the RNA exosome. The RNA exosome may be involved in Ig class switch recombination (CSR) and/or Ig variable region somatic hypermutation (SHM) by targeting AICDA deamination activity to transcribed dsDNA substrates. In the cytoplasm, the RNA exosome complex is involved in general mRNA turnover and specifically degrades inherently unstable mRNAs containing AU-rich elements (AREs) within their 3' untranslated regions, and in RNA surveillance pathways, preventing translation of aberrant mRNAs. It seems to be involved in degradation of histone mRNA. EXOSC10 is required for nucleolar localization of C1D and probably mediates the association of MTREX, C1D and MPHOSPH6 with the RNA exosome involved in the maturation of 5.8S rRNA. Plays a role in the recruitment of replication protein A complex (RPA) and RAD51 to DNA double-strand breaks caused by irradiation, contributing to DNA repair by homologous recombination. Regulates levels of damage-induced RNAs in order to prevent DNA-RNA hybrid formation at DNA double-strand breaks and limit DNA end resection after damage. Plays a role in oocyte development, maturation and survival. Required for normal testis development and mitotic division of spermatogonia. Plays a role in proper embryo development. Required for global protein translation. Required for cell proliferation. This is Exosome complex component 10 from Rattus norvegicus (Rat).